Consider the following 210-residue polypeptide: Urease accessory protein UreG (210 aa).

Position 14-21 (14-21 (GPVGSGKT)) interacts with GTP.

The protein belongs to the SIMIBI class G3E GTPase family. UreG subfamily. As to quaternary structure, homodimer. UreD, UreF and UreG form a complex that acts as a GTP-hydrolysis-dependent molecular chaperone, activating the urease apoprotein by helping to assemble the nickel containing metallocenter of UreC. The UreE protein probably delivers the nickel.

The protein localises to the cytoplasm. In terms of biological role, facilitates the functional incorporation of the urease nickel metallocenter. This process requires GTP hydrolysis, probably effectuated by UreG. The protein is Urease accessory protein UreG of Rhodopseudomonas palustris (strain BisB5).